The primary structure comprises 114 residues: Large ribosomal subunit protein uL22 (114 aa).

The protein belongs to the universal ribosomal protein uL22 family. Part of the 50S ribosomal subunit.

In terms of biological role, this protein binds specifically to 23S rRNA; its binding is stimulated by other ribosomal proteins, e.g. L4, L17, and L20. It is important during the early stages of 50S assembly. It makes multiple contacts with different domains of the 23S rRNA in the assembled 50S subunit and ribosome. The globular domain of the protein is located near the polypeptide exit tunnel on the outside of the subunit, while an extended beta-hairpin is found that lines the wall of the exit tunnel in the center of the 70S ribosome. This is Large ribosomal subunit protein uL22 from Myxococcus xanthus (strain DK1622).